The sequence spans 397 residues: Nuclear pore complex-interacting protein family member B2 (397 aa).

A disordered region spans residues 256 to 397 (NRMGHQPPPP…KLRTGHCTQA (142 aa)). Polar residues predominate over residues 267–277 (QQHSITDNSLS). Positions 278–287 (LKTPPECLLT) are enriched in low complexity. The segment covering 382–391 (KRRRLSKLRT) has biased composition (basic residues).

It belongs to the NPIP family.

It localises to the nucleus. This chain is Nuclear pore complex-interacting protein family member B2, found in Homo sapiens (Human).